A 54-amino-acid polypeptide reads, in one-letter code: Potassium channel toxin alpha-KTx 14.2 (54 aa).

Positions 1-23 are cleaved as a signal peptide; sequence MKIFFAILLILAVCSMAIWTVNG. 3 disulfide bridges follow: Cys30–Cys46, Cys36–Cys51, and Cys40–Cys53.

This sequence belongs to the short scorpion toxin superfamily. Potassium channel inhibitor family. Alpha-KTx 14 subfamily. In terms of tissue distribution, expressed by the venom gland.

It is found in the secreted. Functionally, inhibits potassium channels. May be active towards small conductance calcium-activated potassium channels (KCNN, SK), and less active towards voltage-gated potassium channels (Kv/KCN). The sequence is that of Potassium channel toxin alpha-KTx 14.2 from Olivierus martensii (Manchurian scorpion).